We begin with the raw amino-acid sequence, 636 residues long: ATP-dependent zinc metalloprotease FtsH (636 aa).

Over methionine 1–methionine 12 the chain is Cytoplasmic. A helical transmembrane segment spans residues glycine 13–isoleucine 33. Over arginine 34–leucine 104 the chain is Periplasmic. A helical membrane pass occupies residues leucine 105–phenylalanine 125. Residues methionine 126–glutamate 636 lie on the Cytoplasmic side of the membrane. Glycine 197–threonine 204 contributes to the ATP binding site. Histidine 419 contributes to the Zn(2+) binding site. The active site involves glutamate 420. The Zn(2+) site is built by histidine 423 and aspartate 497.

It in the central section; belongs to the AAA ATPase family. This sequence in the C-terminal section; belongs to the peptidase M41 family. As to quaternary structure, homohexamer. It depends on Zn(2+) as a cofactor.

Its subcellular location is the cell inner membrane. Its function is as follows. Acts as a processive, ATP-dependent zinc metallopeptidase for both cytoplasmic and membrane proteins. Plays a role in the quality control of integral membrane proteins. The sequence is that of ATP-dependent zinc metalloprotease FtsH from Neorickettsia risticii (strain Illinois).